The chain runs to 835 residues: Protein translocase subunit SecA 1 (835 aa).

ATP is bound by residues glutamine 85, glycine 103–threonine 107, and aspartate 492. A disordered region spans residues valine 788–valine 807. The Zn(2+) site is built by cysteine 819, cysteine 821, cysteine 830, and cysteine 831.

The protein belongs to the SecA family. As to quaternary structure, monomer and homodimer. Part of the essential Sec protein translocation apparatus which comprises SecA, SecYEG and auxiliary proteins SecDF. Other proteins may also be involved. Zn(2+) is required as a cofactor.

Its subcellular location is the cell membrane. The protein resides in the cytoplasm. It carries out the reaction ATP + H2O + cellular proteinSide 1 = ADP + phosphate + cellular proteinSide 2.. Functionally, part of the Sec protein translocase complex. Interacts with the SecYEG preprotein conducting channel. Has a central role in coupling the hydrolysis of ATP to the transfer of proteins into and across the cell membrane, serving as an ATP-driven molecular motor driving the stepwise translocation of polypeptide chains across the membrane. The protein is Protein translocase subunit SecA 1 of Bacillus anthracis.